A 137-amino-acid polypeptide reads, in one-letter code: MFHFFRKPPESKKPSVPETEADGFVLLGDTTDEQRMTARGKTSDIEANQPLETNKENSSSVTVSDPEMENKAGQTLENSSLMAELLSDVPFTLAPHVLAVQGTITDLPDHLLSYDGSENLSRFWYDFTLENSVLCDS.

Residues Met1–Ala72 form a disordered region. Residues Asp32–Asp44 are compositionally biased toward basic and acidic residues. Positions Pro50–Val63 are enriched in polar residues. Residues Leu86 to Leu134 enclose the UMA domain.

The polypeptide is UBAP1-MVB12-associated (UMA)-domain containing protein 1 (Homo sapiens (Human)).